The sequence spans 92 residues: Small ribosomal subunit protein uS19c (92 aa).

The protein belongs to the universal ribosomal protein uS19 family.

The protein localises to the plastid. Its subcellular location is the chloroplast. Protein S19 forms a complex with S13 that binds strongly to the 16S ribosomal RNA. The sequence is that of Small ribosomal subunit protein uS19c from Ceratophyllum demersum (Rigid hornwort).